Reading from the N-terminus, the 212-residue chain is Methylthioribulose-1-phosphate dehydratase (212 aa).

Zn(2+) is bound by residues His97 and His99.

Belongs to the aldolase class II family. MtnB subfamily. In terms of assembly, homotetramer. The cofactor is Zn(2+).

It carries out the reaction 5-(methylsulfanyl)-D-ribulose 1-phosphate = 5-methylsulfanyl-2,3-dioxopentyl phosphate + H2O. The protein operates within amino-acid biosynthesis; L-methionine biosynthesis via salvage pathway; L-methionine from S-methyl-5-thio-alpha-D-ribose 1-phosphate: step 2/6. Its function is as follows. Catalyzes the dehydration of methylthioribulose-1-phosphate (MTRu-1-P) into 2,3-diketo-5-methylthiopentyl-1-phosphate (DK-MTP-1-P). The polypeptide is Methylthioribulose-1-phosphate dehydratase (Bacillus thuringiensis subsp. konkukian (strain 97-27)).